Reading from the N-terminus, the 429-residue chain is Serine--tRNA ligase (429 aa).

235 to 237 (TAE) provides a ligand contact to L-serine. 266–268 (RSE) lines the ATP pocket. Glu-289 is an L-serine binding site. 353–356 (EISS) serves as a coordination point for ATP. An L-serine-binding site is contributed by Ser-389.

The protein belongs to the class-II aminoacyl-tRNA synthetase family. Type-1 seryl-tRNA synthetase subfamily. Homodimer. The tRNA molecule binds across the dimer.

The protein resides in the cytoplasm. The catalysed reaction is tRNA(Ser) + L-serine + ATP = L-seryl-tRNA(Ser) + AMP + diphosphate + H(+). It catalyses the reaction tRNA(Sec) + L-serine + ATP = L-seryl-tRNA(Sec) + AMP + diphosphate + H(+). It participates in aminoacyl-tRNA biosynthesis; selenocysteinyl-tRNA(Sec) biosynthesis; L-seryl-tRNA(Sec) from L-serine and tRNA(Sec): step 1/1. In terms of biological role, catalyzes the attachment of serine to tRNA(Ser). Is also able to aminoacylate tRNA(Sec) with serine, to form the misacylated tRNA L-seryl-tRNA(Sec), which will be further converted into selenocysteinyl-tRNA(Sec). This Histophilus somni (strain 2336) (Haemophilus somnus) protein is Serine--tRNA ligase.